We begin with the raw amino-acid sequence, 197 residues long: Ribonuclease HII (197 aa).

Positions 9–197 (KLIAGVDEVG…APVKKALEQF (189 aa)) constitute an RNase H type-2 domain. A divalent metal cation contacts are provided by Asp15, Glu16, and Asp107.

Belongs to the RNase HII family. Mn(2+) serves as cofactor. It depends on Mg(2+) as a cofactor.

The protein localises to the cytoplasm. It catalyses the reaction Endonucleolytic cleavage to 5'-phosphomonoester.. Its function is as follows. Endonuclease that specifically degrades the RNA of RNA-DNA hybrids. This chain is Ribonuclease HII (rnhB), found in Haemophilus influenzae (strain ATCC 51907 / DSM 11121 / KW20 / Rd).